Consider the following 1157-residue polypeptide: Myosin tail region-interacting protein MTI1 (1157 aa).

The 65-residue stretch at 5–69 folds into the SH3 domain; it reads EVPFKVVAQF…PKSFVAVQGS (65 aa). 2 disordered regions span residues 68-116 and 135-156; these read GSEV…GPVP and TAVS…KVPM. Residues 77 to 89 show a composition bias toward polar residues; the sequence is SSPNTGSTEQRTI. Residues 93–110 are compositionally biased toward basic and acidic residues; that stretch reads VEQKDLPEPISPETKKET. A Phosphoserine modification is found at serine 103. Positions 138–149 are enriched in polar residues; it reads SAQVQHDSSSGN. Residues serine 158 and serine 166 each carry the phosphoserine modification. 2 disordered regions span residues 231-256 and 284-888; these read PEPI…KDLP and KKAK…PKVA. Coiled coils occupy residues 234 to 301 and 356 to 430; these read INRA…NKNE and EKEQ…GASR. 3 stretches are compositionally biased toward basic and acidic residues: residues 242-256, 284-296, and 312-383; these read GRIE…KDLP, KKAK…ERSA, and NEKT…RGEN. Residues 398 to 411 show a composition bias toward acidic residues; that stretch reads EGDNDEEKEEEDSE. Composition is skewed to basic and acidic residues over residues 412 to 423 and 506 to 524; these read ENRRAALRERMA and KTLD…EHGT. Residues 544–558 show a composition bias toward acidic residues; sequence DSDEDTDDHEFEDAN. Residue serine 565 is modified to Phosphoserine. A compositionally biased stretch (low complexity) spans 574–585; the sequence is GNNESENVNSGE. Positions 597–606 are enriched in basic and acidic residues; it reads RTAEVSHDIE. Residues 607 to 641 are compositionally biased toward polar residues; the sequence is NSSQNTTGNVLPVSSPQTRVARNGSINSLTKSISG. Phosphoserine occurs at positions 621, 631, and 634. Threonine 636 bears the Phosphothreonine mark. Serine 638 and serine 647 each carry phosphoserine. Residues 642 to 653 are compositionally biased toward basic and acidic residues; it reads ENRRKSINEYHD. Residues 654–668 are compositionally biased toward polar residues; the sequence is TVSTNSSALTETAQD. Composition is skewed to pro residues over residues 691-738 and 747-765; these read PHPV…PVSS and SIPP…PAPL. Residues 769-778 are compositionally biased toward basic and acidic residues; it reads KHNEVEEHVK. Residues 795 to 808 are compositionally biased toward pro residues; sequence NTAPPLPRAPPVPP. Residues 832-853 are compositionally biased toward polar residues; it reads QNVTASTPSMMSTQQRVPTSVL. A Phosphothreonine modification is found at threonine 850. At serine 889 the chain carries Phosphoserine. Residues threonine 894 and threonine 895 each carry the phosphothreonine modification. A Glycyl lysine isopeptide (Lys-Gly) (interchain with G-Cter in ubiquitin) cross-link involves residue lysine 1012.

In terms of assembly, binds to the SH3 domains of the type I myosins MYO3 and MYO5.

It localises to the cytoplasm. It is found in the cytoskeleton. Its subcellular location is the actin patch. Involved in the regulation of actin cytoskeleton. The sequence is that of Myosin tail region-interacting protein MTI1 (BBC1) from Saccharomyces cerevisiae (strain ATCC 204508 / S288c) (Baker's yeast).